We begin with the raw amino-acid sequence, 231 residues long: Putative N-acetylmannosamine-6-phosphate 2-epimerase (231 aa).

The protein belongs to the NanE family.

The enzyme catalyses an N-acyl-D-glucosamine 6-phosphate = an N-acyl-D-mannosamine 6-phosphate. It functions in the pathway amino-sugar metabolism; N-acetylneuraminate degradation; D-fructose 6-phosphate from N-acetylneuraminate: step 3/5. Converts N-acetylmannosamine-6-phosphate (ManNAc-6-P) to N-acetylglucosamine-6-phosphate (GlcNAc-6-P). The polypeptide is Putative N-acetylmannosamine-6-phosphate 2-epimerase (Latilactobacillus sakei subsp. sakei (strain 23K) (Lactobacillus sakei subsp. sakei)).